Here is a 106-residue protein sequence, read N- to C-terminus: UPF0145 protein Tlet_1264 (106 aa).

The protein belongs to the UPF0145 family.

This chain is UPF0145 protein Tlet_1264, found in Pseudothermotoga lettingae (strain ATCC BAA-301 / DSM 14385 / NBRC 107922 / TMO) (Thermotoga lettingae).